The following is a 706-amino-acid chain: Zinc transporter foi (706 aa).

The signal sequence occupies residues 1 to 21 (MARHIMAVCVVCLLCAHRLHC). Topologically, residues 22 to 261 (QDHIESLLGP…EKDKDIFYVW (240 aa)) are extracellular. The segment covering 40–56 (QDQLNARVYTNLSPSSE) has biased composition (polar residues). The interval 40-101 (QDQLNARVYT…HGPTSESRVP (62 aa)) is disordered. N-linked (GlcNAc...) asparagine glycans are attached at residues asparagine 74, asparagine 119, asparagine 176, asparagine 182, asparagine 196, and asparagine 207. The helical transmembrane segment at 262-282 (IYAFISVFACGILGLVGVAII) threads the bilayer. Topologically, residues 283-292 (PFMGSRYYKY) are cytoplasmic. Residues 293–313 (IIQYLVALAVGTMTGDALLHL) form a helical membrane-spanning segment. The Extracellular portion of the chain corresponds to 314–329 (LPHSLAGQDERGMIMK). A helical transmembrane segment spans residues 330–350 (GLGCLGGIIFFYVMEHALTMI). At 351–604 (SEWRKSVEKK…LIKAGMSVKS (254 aa)) the chain is on the cytoplasmic side. 3 positions are modified to phosphoserine: serine 376, serine 377, and serine 381. A helical transmembrane segment spans residues 605–625 (AVYYNLLTGVLSFIGMIFGIA). Residues 626 to 631 (FGQSQD) lie on the Extracellular side of the membrane. A helical transmembrane segment spans residues 632–652 (VAQWMFAVAAGLFIYIALVDM). The Cytoplasmic segment spans residues 653 to 665 (MPEISASHKSLGQ). A helical membrane pass occupies residues 666 to 686 (FLLQILGMLSGVGIMLLIALY). At 687–706 (EGDLMSAFGTAGAASHQHAH) the chain is on the extracellular side.

This sequence belongs to the ZIP transporter (TC 2.A.5) family. Post-translationally, glycosylated. As to expression, maternal foi has almost completely disappeared by embryonic stage 3 except in the pole cells. In stage 6 embryos, expression is enriched in the invaginating mesoderm. In stage 9 embryos, high levels in the anterior and posterior midgut primordia. In stage 14 embryos, broad expression with low levels in the epidermis.

It is found in the cell membrane. In terms of biological role, required for the normal migration of longitudinal and peripheral glial cells. During larval development, required for the migration of the subretinal glia into the eye disk. During embryonic development, also controls the migration of muscle cells toward their attachment sites. Required in the mesoderm for the correct morphogenesis of embryonic gonad and for tracheal branch fusion during tracheal development. Shg may be cooperating with foi to mediate a common mechanism for gonad and tracheal morphogenesis. Acts as a zinc transporter in both yeast and mammalian cells. This is Zinc transporter foi from Drosophila melanogaster (Fruit fly).